The chain runs to 363 residues: Ribonuclease P protein subunit p40 (363 aa).

Component of nuclear RNase P and RNase MRP ribonucleoproteins. RNase P consists of a catalytic RNA moiety and about 10 protein subunits; POP1, POP4, POP5, POP7, RPP14, RPP21, RPP25, RPP30, RPP38 and RPP40. Within the RNase P complex, POP1, POP7 and RPP25 form the 'finger' subcomplex, POP5, RPP14, RPP40 and homodimeric RPP30 form the 'palm' subcomplex, and RPP21, POP4 and RPP38 form the 'wrist' subcomplex. All subunits of the RNase P complex interact with the catalytic RNA. Several subunits of RNase P are also part of the RNase MRP complex. RNase MRP consists of a catalytic RNA moiety and about 8 protein subunits; POP1, POP7, RPP25, RPP30, RPP38, RPP40 and possibly also POP4 and POP5.

Its subcellular location is the nucleus. It is found in the nucleolus. Component of ribonuclease P, a ribonucleoprotein complex that generates mature tRNA molecules by cleaving their 5'-ends. Also a component of the MRP ribonuclease complex, which cleaves pre-rRNA sequences. The protein is Ribonuclease P protein subunit p40 (Rpp40) of Mus musculus (Mouse).